A 302-amino-acid chain; its full sequence is Dehydrodolichyl diphosphate synthase 3 (302 aa).

This sequence belongs to the UPP synthase family. Mg(2+) serves as cofactor.

It functions in the pathway protein modification; protein glycosylation. Catalyzes cis-prenyl chain elongation to produce the polyprenyl backbone of dolichol, a glycosyl carrier-lipid required for the biosynthesis of several classes of glycoprotein. The sequence is that of Dehydrodolichyl diphosphate synthase 3 from Arabidopsis thaliana (Mouse-ear cress).